Reading from the N-terminus, the 354-residue chain is Holliday junction branch migration complex subunit RuvB (354 aa).

Positions 1–22 (MTLQTDDFAPAPARRVVSAAPA) are disordered. The segment at 5–194 (TDDFAPAPAR…FGIVARLEFY (190 aa)) is large ATPase domain (RuvB-L). Positions 9–22 (APAPARRVVSAAPA) are enriched in low complexity. ATP contacts are provided by residues Leu33, Arg34, Gly75, Lys78, Thr79, Thr80, 141–143 (EDY), Arg184, Tyr194, and Arg231. A Mg(2+)-binding site is contributed by Thr79. The interval 195–265 (SAQELARIVK…IAERALAMLD (71 aa)) is small ATPAse domain (RuvB-S). Residues 268–354 (PEGLDVMDRK…GAQAPGLFAV (87 aa)) are head domain (RuvB-H). DNA is bound by residues Arg323 and Arg328.

Belongs to the RuvB family. As to quaternary structure, homohexamer. Forms an RuvA(8)-RuvB(12)-Holliday junction (HJ) complex. HJ DNA is sandwiched between 2 RuvA tetramers; dsDNA enters through RuvA and exits via RuvB. An RuvB hexamer assembles on each DNA strand where it exits the tetramer. Each RuvB hexamer is contacted by two RuvA subunits (via domain III) on 2 adjacent RuvB subunits; this complex drives branch migration. In the full resolvosome a probable DNA-RuvA(4)-RuvB(12)-RuvC(2) complex forms which resolves the HJ.

The protein localises to the cytoplasm. The catalysed reaction is ATP + H2O = ADP + phosphate + H(+). In terms of biological role, the RuvA-RuvB-RuvC complex processes Holliday junction (HJ) DNA during genetic recombination and DNA repair, while the RuvA-RuvB complex plays an important role in the rescue of blocked DNA replication forks via replication fork reversal (RFR). RuvA specifically binds to HJ cruciform DNA, conferring on it an open structure. The RuvB hexamer acts as an ATP-dependent pump, pulling dsDNA into and through the RuvAB complex. RuvB forms 2 homohexamers on either side of HJ DNA bound by 1 or 2 RuvA tetramers; 4 subunits per hexamer contact DNA at a time. Coordinated motions by a converter formed by DNA-disengaged RuvB subunits stimulates ATP hydrolysis and nucleotide exchange. Immobilization of the converter enables RuvB to convert the ATP-contained energy into a lever motion, pulling 2 nucleotides of DNA out of the RuvA tetramer per ATP hydrolyzed, thus driving DNA branch migration. The RuvB motors rotate together with the DNA substrate, which together with the progressing nucleotide cycle form the mechanistic basis for DNA recombination by continuous HJ branch migration. Branch migration allows RuvC to scan DNA until it finds its consensus sequence, where it cleaves and resolves cruciform DNA. The protein is Holliday junction branch migration complex subunit RuvB of Verminephrobacter eiseniae (strain EF01-2).